A 302-amino-acid chain; its full sequence is Sulfate adenylyltransferase subunit 2 (302 aa).

Belongs to the PAPS reductase family. CysD subfamily. In terms of assembly, heterodimer composed of CysD, the smaller subunit, and CysN.

The catalysed reaction is sulfate + ATP + H(+) = adenosine 5'-phosphosulfate + diphosphate. Its pathway is sulfur metabolism; hydrogen sulfide biosynthesis; sulfite from sulfate: step 1/3. With CysN forms the ATP sulfurylase (ATPS) that catalyzes the adenylation of sulfate producing adenosine 5'-phosphosulfate (APS) and diphosphate, the first enzymatic step in sulfur assimilation pathway. APS synthesis involves the formation of a high-energy phosphoric-sulfuric acid anhydride bond driven by GTP hydrolysis by CysN coupled to ATP hydrolysis by CysD. This is Sulfate adenylyltransferase subunit 2 from Shigella boydii serotype 4 (strain Sb227).